The primary structure comprises 148 residues: Ubiquitin-conjugating enzyme E2-16 kDa (148 aa).

The 147-residue stretch at 2-148 (SSSKRIAKEL…AKEWTKKYAV (147 aa)) folds into the UBC core domain. Ser-12 bears the Phosphoserine mark. The active-site Glycyl thioester intermediate is the Cys-86. Lys-91 is covalently cross-linked (Glycyl lysine isopeptide (Lys-Gly) (interchain with G-Cter in ubiquitin)).

This sequence belongs to the ubiquitin-conjugating enzyme family. Component of the RSP5-UBA1-UBC5 ubiquitin ligase complex composed of E3 RSP5, E1 UBA1 and E2 UBC5. The N-terminus is blocked.

The enzyme catalyses S-ubiquitinyl-[E1 ubiquitin-activating enzyme]-L-cysteine + [E2 ubiquitin-conjugating enzyme]-L-cysteine = [E1 ubiquitin-activating enzyme]-L-cysteine + S-ubiquitinyl-[E2 ubiquitin-conjugating enzyme]-L-cysteine.. Its pathway is protein modification; protein ubiquitination. Functionally, catalyzes the covalent attachment of ubiquitin to other proteins. Mediates the selective degradation of short-lived and abnormal proteins. The RSP5-UBA1-UBC5 ubiquitin ligase complex ubiquitinates RPO21 forming 'Lys-63'-linked polyubiquitin chains. This is Ubiquitin-conjugating enzyme E2-16 kDa (UBC5) from Saccharomyces cerevisiae (strain ATCC 204508 / S288c) (Baker's yeast).